The primary structure comprises 1023 residues: Cell division cycle-associated protein 2 (1023 aa).

The span at 1–14 (MDANSKDKPPETKE) shows a compositional bias: basic and acidic residues. The tract at residues 1–21 (MDANSKDKPPETKESAMNNAG) is disordered. A phosphoserine mark is found at Ser-98, Ser-120, Ser-126, Ser-131, Ser-210, Ser-291, and Ser-309. Thr-312 is modified (phosphothreonine). The PP1-binding domain maps to 389 to 449 (KRKRVTFGED…PEPLPQPDFD (61 aa)). Ser-400 and Ser-407 each carry phosphoserine. Residue Thr-412 is modified to Phosphothreonine. The residue at position 437 (Ser-437) is a Phosphoserine. Residues 542-580 (SQETKCTKRALPKKSQVLKSCRKKKGKGKKSVQKSLYGE) are disordered. Residues 561–573 (SCRKKKGKGKKSV) show a composition bias toward basic residues. Phosphoserine occurs at positions 591 and 614. Positions 667 to 729 (SSLGNATSDE…ERVASDSPKP (63 aa)) are disordered. Residues 679–691 (NTNIMNINENKNI) show a composition bias toward low complexity. Residues 696-706 (NKSESENEPKA) show a composition bias toward basic and acidic residues. Residues Ser-710 and Ser-756 each carry the phosphoserine modification. Lys-762 is covalently cross-linked (Glycyl lysine isopeptide (Lys-Gly) (interchain with G-Cter in SUMO2)). Positions 803–816 (ESKSQSEDLGRKPM) are enriched in basic and acidic residues. 2 disordered regions span residues 803-860 (ESKS…GSSV) and 936-1023 (SPIK…ERKQ). Phosphoserine is present on residues Ser-936 and Ser-977. 2 stretches are compositionally biased toward polar residues: residues 979–992 (CIST…TSQF) and 1000–1010 (SLNGKGESSLT). Ser-1000 is subject to Phosphoserine. Positions 1013 to 1023 (ERIEHNGERKQ) are enriched in basic and acidic residues.

In terms of assembly, interacts with PPP1CC. In terms of processing, phosphorylated by CDK1. May regulate its subcellular location. Ubiquitously expressed.

It localises to the nucleus. Its function is as follows. Regulator of chromosome structure during mitosis required for condensin-depleted chromosomes to retain their compact architecture through anaphase. Acts by mediating the recruitment of phopsphatase PP1-gamma subunit (PPP1CC) to chromatin at anaphase and into the following interphase. At anaphase onset, its association with chromatin targets a pool of PPP1CC to dephosphorylate substrates. The sequence is that of Cell division cycle-associated protein 2 (CDCA2) from Homo sapiens (Human).